We begin with the raw amino-acid sequence, 183 residues long: Capsid protein (183 aa).

The interval 136-183 (NAPILSTLPETTVVRRRGRSPRRRTPSPRRRRSQSPRRRRSQSRESQC) is disordered. The segment covering 149-176 (VRRRGRSPRRRTPSPRRRRSQSPRRRRS) has biased composition (basic residues). Phosphoserine; by host occurs at positions 155, 162, and 170. The 1; half-length repeat unit spans residues 155–161 (SPRRRTP). The interval 155 to 177 (SPRRRTPSPRRRRSQSPRRRRSQ) is 3 X 8 AA repeats of S-P-R-R-R-[PR]-S-Q. The Bipartite nuclear localization signal motif lies at 158 to 175 (RRTPSPRRRRSQSPRRRR). Repeat copies occupy residues 162–169 (SPRRRRSQ) and 170–177 (SPRRRRSQ). The segment at 177-183 (QSRESQC) is RNA binding.

It belongs to the orthohepadnavirus core antigen family. As to quaternary structure, homodimerizes, then multimerizes. Interacts with cytosol exposed regions of viral L glycoprotein present in the reticulum-to-Golgi compartment. Interacts with human FLNB. Phosphorylated form interacts with host importin alpha; this interaction depends on the exposure of the NLS, which itself depends upon genome maturation and/or phosphorylation of the capsid protein. Interacts with host NUP153. In terms of processing, phosphorylated by host SRPK1, SRPK2, and maybe protein kinase C or GAPDH. Phosphorylation is critical for pregenomic RNA packaging. Protein kinase C phosphorylation is stimulated by HBx protein and may play a role in transport of the viral genome to the nucleus at the late step during the viral replication cycle.

The protein localises to the virion. It is found in the host cytoplasm. Functionally, self assembles to form an icosahedral capsid. Most capsids appear to be large particles with an icosahedral symmetry of T=4 and consist of 240 copies of capsid protein, though a fraction forms smaller T=3 particles consisting of 180 capsid proteins. Entering capsids are transported along microtubules to the nucleus. Phosphorylation of the capsid is thought to induce exposure of nuclear localization signal in the C-terminal portion of the capsid protein that allows binding to the nuclear pore complex via the importin (karyopherin-) alpha and beta. Capsids are imported in intact form through the nuclear pore into the nuclear basket, where it probably binds NUP153. Only capsids that contain the mature viral genome can release the viral DNA and capsid protein into the nucleoplasm. Immature capsids get stuck in the basket. Capsids encapsulate the pre-genomic RNA and the P protein. Pre-genomic RNA is reverse-transcribed into DNA while the capsid is still in the cytoplasm. The capsid can then either be directed to the nucleus, providing more genomes for transcription, or bud through the endoplasmic reticulum to provide new virions. The protein is Capsid protein of Homo sapiens (Human).